We begin with the raw amino-acid sequence, 881 residues long: Formin-like protein 10 (881 aa).

Residues 1–24 form the signal peptide; it reads MAMKRVVFLLLLVAASALVKSSRG. The disordered stretch occupies residues 194-223; sequence LTPSNSLNMEPPSPYYPSKSAHKHQGVAPP. Residues 236-256 form a helical membrane-spanning segment; that stretch reads VVLIAVLPTAALSFLAAFLCF. The segment covering 333–346 has biased composition (polar residues); that stretch reads TLVTGGTQENNATS. Disordered stretches follow at residues 333–427, 683–703, and 837–881; these read TLVT…EVNA, ENGRSPPFPSTSDDNSNESLQ, and ASQK…DSND. The segment covering 351–390 has biased composition (pro residues); the sequence is LMPPPPPPPPPPPPPPPPPPPRPPPPPPPIKKGAPPPAPP. A compositionally biased stretch (low complexity) spans 400-424; that stretch reads LSPTESSRSEESSASELASESSETE. One can recognise an FH2 domain in the interval 422–854; sequence ETEVNAPRAK…KSQANGNSNN (433 aa). Residues 692 to 701 show a composition bias toward polar residues; that stretch reads STSDDNSNES. Residues 846-865 are compositionally biased toward low complexity; the sequence is SQANGNSNNPSSQSNPQEQQ. A compositionally biased stretch (basic and acidic residues) spans 870–881; the sequence is LDHHFDSSDSND.

Belongs to the formin-like family. Class-I subfamily.

The protein resides in the membrane. This is Formin-like protein 10 (FH10) from Oryza sativa subsp. japonica (Rice).